A 459-amino-acid polypeptide reads, in one-letter code: Replication initiator protein (459 aa).

Essential for pSAM2 replication. The protein is Replication initiator protein (repSA) of Streptomyces ambofaciens.